Reading from the N-terminus, the 667-residue chain is Cysteine-rich receptor-like protein kinase 11 (667 aa).

Residues 1–24 form the signal peptide; sequence MKQRSLFSVLCFFFISFGVASVSA. Gnk2-homologous domains follow at residues 25 to 129 and 135 to 248; these read QTCT…NTSF and LNPR…LYTY. At 25–292 the chain is on the extracellular side; that stretch reads QTCTTDKGTF…SKGISAGVVV (268 aa). N-linked (GlcNAc...) asparagine glycosylation is found at N37, N54, N64, N106, N126, N150, and N254. Residues 259–268 show a composition bias toward pro residues; it reads SPPPEPPVTV. Residues 259-282 are disordered; the sequence is SPPPEPPVTVPQPAGDQDNPTNND. N281 carries an N-linked (GlcNAc...) asparagine glycan. A helical transmembrane segment spans residues 293-313; it reads AITVPTVIAILILLVLGFVLF. The Cytoplasmic portion of the chain corresponds to 314–667; the sequence is RRRKSYQRTK…YTSKSSSFSS (354 aa). One can recognise a Protein kinase domain in the interval 350–629; the sequence is FSTSNKLGEG…IILMLTSNTI (280 aa). Residues 356 to 364 and K378 contribute to the ATP site; that span reads LGEGGFGAV. Y423 bears the Phosphotyrosine mark. D475 functions as the Proton acceptor in the catalytic mechanism. S479 is subject to Phosphoserine. A Phosphothreonine modification is found at T515. The residue at position 523 (Y523) is a Phosphotyrosine.

The protein belongs to the protein kinase superfamily. Ser/Thr protein kinase family. CRK subfamily. Detected in root, stem, leaf and flower.

It localises to the membrane. It catalyses the reaction L-seryl-[protein] + ATP = O-phospho-L-seryl-[protein] + ADP + H(+). The enzyme catalyses L-threonyl-[protein] + ATP = O-phospho-L-threonyl-[protein] + ADP + H(+). The chain is Cysteine-rich receptor-like protein kinase 11 (CRK11) from Arabidopsis thaliana (Mouse-ear cress).